A 306-amino-acid chain; its full sequence is Ornithine carbamoyltransferase (306 aa).

Residues 53-56 (STRT), Gln-80, Arg-104, and 131-134 (HPCQ) contribute to the carbamoyl phosphate site. Residues Asn-162, Asp-220, and 224 to 225 (SM) contribute to the L-ornithine site. Carbamoyl phosphate contacts are provided by residues 260-261 (CL) and Arg-288.

It belongs to the aspartate/ornithine carbamoyltransferase superfamily. OTCase family.

It is found in the cytoplasm. The catalysed reaction is carbamoyl phosphate + L-ornithine = L-citrulline + phosphate + H(+). It participates in amino-acid biosynthesis; L-arginine biosynthesis; L-arginine from L-ornithine and carbamoyl phosphate: step 1/3. Reversibly catalyzes the transfer of the carbamoyl group from carbamoyl phosphate (CP) to the N(epsilon) atom of ornithine (ORN) to produce L-citrulline. This Dechloromonas aromatica (strain RCB) protein is Ornithine carbamoyltransferase.